The following is a 488-amino-acid chain: MQTLNRRNFPGRQHPDRVIQFGEGNFLRAFVDWQLDLLNEHTDLDAGIVIVRPIDSDFPPALDTQDGLYTTIIRGLNEQGEAVREPRLIRSVNREINVYRQFDEYLALAHDPNIRFVFSNTTEAGISYHADDSLSDAPPVSFPAKLTRLLYERFCHFDGAADKGWVLLPCELIDYNGVALKELVLRYAAQWKLTPTFTAWLNDHNTFCSTLVDRIVTGYPRAEVEALQQEMGYQDTFWDTAEHFYLFVIQGPQWLAEELRLNKLDLNVRIVDDIKPYKERKVAILNGAHTALVPVAFLAGLDTVGESMDDALIGKFVEKTIAEEIVPVLDLPHDELTSFAQAVLSRFRNPFIQHQLLSISLNGMTKFRTRILPQLLTYRERHGELPARLTFALAALIAFYRGERSGEGDTLQTYPLQDDAHWLERYSTLWAGVKENTVSLAELVNVVLRDADHWEQDLTQVPGLAAQVTEQLQTIVERGMRAAVEGYC.

18–29 (VIQFGEGNFLRA) serves as a coordination point for NAD(+).

The protein belongs to the mannitol dehydrogenase family. UxaB subfamily.

It carries out the reaction D-altronate + NAD(+) = keto-D-tagaturonate + NADH + H(+). The protein operates within carbohydrate metabolism; pentose and glucuronate interconversion. In Pectobacterium carotovorum subsp. carotovorum (strain PC1), this protein is Altronate oxidoreductase.